A 248-amino-acid polypeptide reads, in one-letter code: 4-hydroxy-tetrahydrodipicolinate reductase (248 aa).

13–18 (GITGRL) is an NAD(+) binding site. Position 36 (Arg-36) interacts with NADP(+). Residues 84 to 86 (GTT) and 108 to 111 (AANF) each bind NAD(+). The active-site Proton donor/acceptor is the His-140. His-141 contacts (S)-2,3,4,5-tetrahydrodipicolinate. Catalysis depends on Lys-144, which acts as the Proton donor. 150-151 (GT) provides a ligand contact to (S)-2,3,4,5-tetrahydrodipicolinate.

It belongs to the DapB family.

The protein localises to the cytoplasm. It catalyses the reaction (S)-2,3,4,5-tetrahydrodipicolinate + NAD(+) + H2O = (2S,4S)-4-hydroxy-2,3,4,5-tetrahydrodipicolinate + NADH + H(+). It carries out the reaction (S)-2,3,4,5-tetrahydrodipicolinate + NADP(+) + H2O = (2S,4S)-4-hydroxy-2,3,4,5-tetrahydrodipicolinate + NADPH + H(+). Its pathway is amino-acid biosynthesis; L-lysine biosynthesis via DAP pathway; (S)-tetrahydrodipicolinate from L-aspartate: step 4/4. Its function is as follows. Catalyzes the conversion of 4-hydroxy-tetrahydrodipicolinate (HTPA) to tetrahydrodipicolinate. This is 4-hydroxy-tetrahydrodipicolinate reductase from Gluconobacter oxydans (strain 621H) (Gluconobacter suboxydans).